The sequence spans 213 residues: 3-demethoxyubiquinol 3-hydroxylase (213 aa).

Positions 62, 92, 95, 144, 176, and 179 each coordinate Fe cation.

This sequence belongs to the COQ7 family. Fe cation is required as a cofactor.

It localises to the cell membrane. The catalysed reaction is a 5-methoxy-2-methyl-3-(all-trans-polyprenyl)benzene-1,4-diol + AH2 + O2 = a 3-demethylubiquinol + A + H2O. Its pathway is cofactor biosynthesis; ubiquinone biosynthesis. In terms of biological role, catalyzes the hydroxylation of 2-nonaprenyl-3-methyl-6-methoxy-1,4-benzoquinol during ubiquinone biosynthesis. The chain is 3-demethoxyubiquinol 3-hydroxylase from Legionella pneumophila subsp. pneumophila (strain Philadelphia 1 / ATCC 33152 / DSM 7513).